We begin with the raw amino-acid sequence, 394 residues long: Ribulose bisphosphate carboxylase large chain (394 aa).

Lysine 5 carries the post-translational modification N6,N6,N6-trimethyllysine. Positions 114 and 164 each coordinate substrate. Lysine 166 serves as the catalytic Proton acceptor. A substrate-binding site is contributed by lysine 168. Mg(2+) is bound by residues lysine 192, aspartate 194, and glutamate 195. Residue lysine 192 is modified to N6-carboxylysine. Histidine 285 (proton acceptor) is an active-site residue. The substrate site is built by arginine 286, histidine 318, and serine 370.

Belongs to the RuBisCO large chain family. Type I subfamily. As to quaternary structure, heterohexadecamer of 8 large chains and 8 small chains. The cofactor is Mg(2+).

The protein localises to the plastid. Its subcellular location is the chloroplast. It carries out the reaction 2 (2R)-3-phosphoglycerate + 2 H(+) = D-ribulose 1,5-bisphosphate + CO2 + H2O. The enzyme catalyses D-ribulose 1,5-bisphosphate + O2 = 2-phosphoglycolate + (2R)-3-phosphoglycerate + 2 H(+). Its function is as follows. RuBisCO catalyzes two reactions: the carboxylation of D-ribulose 1,5-bisphosphate, the primary event in carbon dioxide fixation, as well as the oxidative fragmentation of the pentose substrate in the photorespiration process. Both reactions occur simultaneously and in competition at the same active site. In Victoria cruziana (Santa Cruz water lily), this protein is Ribulose bisphosphate carboxylase large chain (rbcL).